We begin with the raw amino-acid sequence, 248 residues long: Calpain small subunit 2 (248 aa).

Positions 89, 92, 94, 117, 132, 134, 136, 138, 143, 162, 164, 166, and 205 each coordinate Ca(2+). EF-hand domains follow at residues 119–152 (FSLDTCRSIVSVMDSDTTGKLGFEEFKYLWNNIK), 149–184 (NNIKKWQCVYKQYDRDHSGSLGSSQLRGALQAAGFQ), 185–213 (LNEQLYQMIVRRYANEDGDMDFNNFISCL), and 214–248 (VRLDAMFRAFKSLDRDRDGLIQVSIKEWLQLTMYS).

Heterodimer of a large (catalytic) and a small (regulatory) subunit.

Its subcellular location is the cytoplasm. It localises to the cell membrane. In terms of biological role, calcium-regulated non-lysosomal thiol-protease which catalyzes limited proteolysis of substrates involved in cytoskeletal remodeling and signal transduction. This small subunit may act as a tissue-specific chaperone of the large subunit, possibly by helping it fold into its correct conformation for activity. This is Calpain small subunit 2 (CAPNS2) from Homo sapiens (Human).